The following is a 237-amino-acid chain: 2-C-methyl-D-erythritol 4-phosphate cytidylyltransferase (237 aa).

It belongs to the IspD/TarI cytidylyltransferase family. IspD subfamily.

It carries out the reaction 2-C-methyl-D-erythritol 4-phosphate + CTP + H(+) = 4-CDP-2-C-methyl-D-erythritol + diphosphate. It participates in isoprenoid biosynthesis; isopentenyl diphosphate biosynthesis via DXP pathway; isopentenyl diphosphate from 1-deoxy-D-xylulose 5-phosphate: step 2/6. In terms of biological role, catalyzes the formation of 4-diphosphocytidyl-2-C-methyl-D-erythritol from CTP and 2-C-methyl-D-erythritol 4-phosphate (MEP). This chain is 2-C-methyl-D-erythritol 4-phosphate cytidylyltransferase, found in Paraburkholderia xenovorans (strain LB400).